The chain runs to 139 residues: Protein AC53 (139 aa).

Its subcellular location is the host cytoplasm. The protein localises to the host nucleus. Its function is as follows. Plays a role in nucleocapsid assembly. This is Protein AC53 (AC53) from Lepidoptera (butterflies and moths).